The primary structure comprises 227 residues: Cytidylate kinase (227 aa).

12–20 (GPSGAGKGT) provides a ligand contact to ATP.

This sequence belongs to the cytidylate kinase family. Type 1 subfamily.

Its subcellular location is the cytoplasm. It carries out the reaction CMP + ATP = CDP + ADP. The catalysed reaction is dCMP + ATP = dCDP + ADP. This is Cytidylate kinase from Shigella flexneri.